The sequence spans 296 residues: Peptide transport system permease protein SapC (296 aa).

Topologically, residues methionine 1–serine 28 are cytoplasmic. Residues alanine 29–phenylalanine 49 form a helical membrane-spanning segment. Over alanine 50–threonine 98 the chain is Periplasmic. A helical transmembrane segment spans residues valine 99–phenylalanine 119. The ABC transmembrane type-1 domain maps to valine 99–glycine 284. At alanine 120–histidine 133 the chain is on the cytoplasmic side. A helical transmembrane segment spans residues isoleucine 134–alanine 154. Residues glycine 155–aspartate 196 are Periplasmic-facing. The helical transmembrane segment at glycine 197–valine 217 threads the bilayer. Over threonine 218–arginine 222 the chain is Cytoplasmic. The chain crosses the membrane as a helical span at residues alanine 223–leucine 243. Topologically, residues proline 244–glutamate 257 are periplasmic. A helical membrane pass occupies residues leucine 258–leucine 278. The Cytoplasmic portion of the chain corresponds to leucine 279–glutamate 296.

It belongs to the binding-protein-dependent transport system permease family. OppBC subfamily.

The protein resides in the cell inner membrane. Functionally, involved in a peptide intake transport system that plays a role in the resistance to antimicrobial peptides. This Escherichia coli O6:H1 (strain CFT073 / ATCC 700928 / UPEC) protein is Peptide transport system permease protein SapC (sapC).